The following is a 68-amino-acid chain: Neuronal regeneration-related protein (68 aa).

The interval 21-54 is disordered; that stretch reads MEGRLPKGRLPVPKEVNRKKNDETNAASLTPLGS. The span at 44 to 54 shows a compositional bias: polar residues; it reads TNAASLTPLGS.

As to quaternary structure, interacts with the latency-associated peptides (LAP) of TGFB1 and TGFB2; the interaction results in a decrease in TGFB autoinduction. Interacts with FLNA. Post-translationally, phosphorylated on Ser-59. Phosphorylation decreases stability and activity.

Its subcellular location is the cytoplasm. Functionally, may have roles in neural function and cellular differentiation. Ectopic expression promotes axonal regeneration, induces differentiation of fibroblast into myofibroblast, induces myofibroblast ameboid migration, augments motility of gliomas, and increases retinoic-acid regulation of lipid-droplet biogenesis. Down-regulates the expression of TGFB1 and TGFB2 but not of TGFB3. May play a role in the regulation of alveolar generation. This Macaca fascicularis (Crab-eating macaque) protein is Neuronal regeneration-related protein (NREP).